Here is a 78-residue protein sequence, read N- to C-terminus: Large ribosomal subunit protein bL28 (78 aa).

The protein belongs to the bacterial ribosomal protein bL28 family.

This is Large ribosomal subunit protein bL28 from Marinobacter nauticus (strain ATCC 700491 / DSM 11845 / VT8) (Marinobacter aquaeolei).